The sequence spans 621 residues: MAU2 chromatid cohesion factor homolog (621 aa).

TPR repeat units lie at residues 96–129 (FDTASLLAQLHLQTEQSSHAKAMLRRAVELSQNN), 451–484 (GGFYYVQGLHAFHKNSFHEAKRFLRETLKMANAE), and 491–524 (SCSLVLLSHVFLSIGNSKESMNMVTPAMQLASKI).

It belongs to the SCC4/mau-2 family. As to quaternary structure, interacts with Nipped-B to form the cohesin loading complex.

The protein resides in the nucleus. Its subcellular location is the nucleoplasm. Functionally, required for association of the cohesin complex with chromatin during interphase. Plays a role in sister chromatid cohesion and normal progression through prometaphase. In Drosophila virilis (Fruit fly), this protein is MAU2 chromatid cohesion factor homolog.